The primary structure comprises 153 residues: MKCPFCNSADTRVKNSRHSDDNMSVRRRRLCEVCNSRFTTLEELLLKPIMVLKKDGRMEPFDKQKLLTSIMLATNKRPVTHAQINMVLSKILYKFESVKEDVIPARVIGEIVKNNLLVLDKVAYIRFVSVYMDFSDADDFCSLVEKIKEGSDK.

The tract at residues M1–D20 is disordered. The segment at C3 to C34 is a zinc-finger region. The span at T11–D20 shows a compositional bias: basic and acidic residues. Residues I49 to D139 form the ATP-cone domain.

Belongs to the NrdR family. Requires Zn(2+) as cofactor.

Functionally, negatively regulates transcription of bacterial ribonucleotide reductase nrd genes and operons by binding to NrdR-boxes. This Anaplasma phagocytophilum (strain HZ) protein is Transcriptional repressor NrdR.